The primary structure comprises 86 residues: Large ribosomal subunit protein bL27 (86 aa).

This sequence belongs to the bacterial ribosomal protein bL27 family.

The protein is Large ribosomal subunit protein bL27 of Koribacter versatilis (strain Ellin345).